Consider the following 164-residue polypeptide: V-type proton ATPase 16 kDa proteolipid subunit (164 aa).

Residues 1 to 9 (MSNFAGDET) are Lumenal-facing. A helical transmembrane segment spans residues 10–32 (APFFGFLGAAAALVFSCMGAAYG). The Cytoplasmic segment spans residues 33 to 54 (TAKSGVGVASMGVMRPELVMKS). Residues 55 to 75 (IVPVVMAGVLGIYGLIIAVII) form a helical membrane-spanning segment. Residues 76–94 (STGINPKTKSYYLFDGYAH) are Lumenal-facing. Residues 95–116 (LSSGLACGLAGLSAGMAIGIVG) form a helical membrane-spanning segment. Topologically, residues 117 to 128 (DAGVRANAQQPK) are cytoplasmic. A helical transmembrane segment spans residues 129–154 (LFVGMILILIFAEALALYGLIVGIIL). Residues 155-164 (SSRAGQSRAE) lie on the Lumenal side of the membrane.

The protein belongs to the V-ATPase proteolipid subunit family. As to quaternary structure, V-ATPase is a heteromultimeric enzyme composed of a peripheral catalytic V1 complex (main components: subunits A, B, C, D, E, and F) attached to an integral membrane V0 proton pore complex (main component: the proteolipid protein; which is present as a hexamer that forms the proton-conducting pore).

Its subcellular location is the vacuole membrane. Proton-conducting pore forming subunit of the membrane integral V0 complex of vacuolar ATPase. V-ATPase is responsible for acidifying a variety of intracellular compartments in eukaryotic cells. This Solanum lycopersicum (Tomato) protein is V-type proton ATPase 16 kDa proteolipid subunit.